Reading from the N-terminus, the 245-residue chain is 1-(5-phosphoribosyl)-5-[(5-phosphoribosylamino)methylideneamino] imidazole-4-carboxamide isomerase (245 aa).

Asp11 (proton acceptor) is an active-site residue. Asp132 (proton donor) is an active-site residue.

Belongs to the HisA/HisF family.

The protein resides in the cytoplasm. The catalysed reaction is 1-(5-phospho-beta-D-ribosyl)-5-[(5-phospho-beta-D-ribosylamino)methylideneamino]imidazole-4-carboxamide = 5-[(5-phospho-1-deoxy-D-ribulos-1-ylimino)methylamino]-1-(5-phospho-beta-D-ribosyl)imidazole-4-carboxamide. Its pathway is amino-acid biosynthesis; L-histidine biosynthesis; L-histidine from 5-phospho-alpha-D-ribose 1-diphosphate: step 4/9. The protein is 1-(5-phosphoribosyl)-5-[(5-phosphoribosylamino)methylideneamino] imidazole-4-carboxamide isomerase of Bacillus pumilus (strain SAFR-032).